The sequence spans 492 residues: N-succinylglutamate 5-semialdehyde dehydrogenase (492 aa).

220 to 225 is a binding site for NAD(+); sequence GSASTG. Catalysis depends on residues Glu-243 and Cys-277.

The protein belongs to the aldehyde dehydrogenase family. AstD subfamily.

The enzyme catalyses N-succinyl-L-glutamate 5-semialdehyde + NAD(+) + H2O = N-succinyl-L-glutamate + NADH + 2 H(+). The protein operates within amino-acid degradation; L-arginine degradation via AST pathway; L-glutamate and succinate from L-arginine: step 4/5. In terms of biological role, catalyzes the NAD-dependent reduction of succinylglutamate semialdehyde into succinylglutamate. The protein is N-succinylglutamate 5-semialdehyde dehydrogenase of Salmonella agona (strain SL483).